We begin with the raw amino-acid sequence, 491 residues long: Aspartyl/glutamyl-tRNA(Asn/Gln) amidotransferase subunit B (491 aa).

It belongs to the GatB/GatE family. GatB subfamily. Heterotrimer of A, B and C subunits.

It carries out the reaction L-glutamyl-tRNA(Gln) + L-glutamine + ATP + H2O = L-glutaminyl-tRNA(Gln) + L-glutamate + ADP + phosphate + H(+). It catalyses the reaction L-aspartyl-tRNA(Asn) + L-glutamine + ATP + H2O = L-asparaginyl-tRNA(Asn) + L-glutamate + ADP + phosphate + 2 H(+). Allows the formation of correctly charged Asn-tRNA(Asn) or Gln-tRNA(Gln) through the transamidation of misacylated Asp-tRNA(Asn) or Glu-tRNA(Gln) in organisms which lack either or both of asparaginyl-tRNA or glutaminyl-tRNA synthetases. The reaction takes place in the presence of glutamine and ATP through an activated phospho-Asp-tRNA(Asn) or phospho-Glu-tRNA(Gln). The chain is Aspartyl/glutamyl-tRNA(Asn/Gln) amidotransferase subunit B from Burkholderia lata (strain ATCC 17760 / DSM 23089 / LMG 22485 / NCIMB 9086 / R18194 / 383).